Here is a 418-residue protein sequence, read N- to C-terminus: Protein MAEA homolog (418 aa).

In terms of domain architecture, LisH spans 141-173 (NNTKLKRILVDYMLRMSYFETATKLSESSNIMD). The region spanning 179–236 (IFREAKKVIDALKNREVASALTWCADNKTRLKKSKSKFEFQLRLQEFIELVRVDTAES) is the CTLH domain. The RING-Gid-type zinc-finger motif lies at 330–403 (CTKEDPLSQE…NGGKITCPRT (74 aa)).

Interacts with RANBPM.

The protein localises to the cytoplasm. The protein is Protein MAEA homolog of Arabidopsis thaliana (Mouse-ear cress).